The primary structure comprises 380 residues: Queuine tRNA-ribosyltransferase (380 aa).

Aspartate 89 serves as the catalytic Proton acceptor. Residues 89-93 (DSGGF), aspartate 143, glutamine 187, and glycine 214 contribute to the substrate site. Residues 245–251 (GVGKPED) are RNA binding. Aspartate 264 acts as the Nucleophile in catalysis. The segment at 269–273 (TRNAR) is RNA binding; important for wobble base 34 recognition. Residues cysteine 302, cysteine 304, cysteine 307, and histidine 333 each coordinate Zn(2+).

This sequence belongs to the queuine tRNA-ribosyltransferase family. In terms of assembly, homodimer. Within each dimer, one monomer is responsible for RNA recognition and catalysis, while the other monomer binds to the replacement base PreQ1. It depends on Zn(2+) as a cofactor.

It catalyses the reaction 7-aminomethyl-7-carbaguanine + guanosine(34) in tRNA = 7-aminomethyl-7-carbaguanosine(34) in tRNA + guanine. The protein operates within tRNA modification; tRNA-queuosine biosynthesis. Catalyzes the base-exchange of a guanine (G) residue with the queuine precursor 7-aminomethyl-7-deazaguanine (PreQ1) at position 34 (anticodon wobble position) in tRNAs with GU(N) anticodons (tRNA-Asp, -Asn, -His and -Tyr). Catalysis occurs through a double-displacement mechanism. The nucleophile active site attacks the C1' of nucleotide 34 to detach the guanine base from the RNA, forming a covalent enzyme-RNA intermediate. The proton acceptor active site deprotonates the incoming PreQ1, allowing a nucleophilic attack on the C1' of the ribose to form the product. After dissociation, two additional enzymatic reactions on the tRNA convert PreQ1 to queuine (Q), resulting in the hypermodified nucleoside queuosine (7-(((4,5-cis-dihydroxy-2-cyclopenten-1-yl)amino)methyl)-7-deazaguanosine). The sequence is that of Queuine tRNA-ribosyltransferase from Proteus mirabilis (strain HI4320).